We begin with the raw amino-acid sequence, 135 residues long: Thyrostimulin beta-5 subunit (135 aa).

Positions 1–19 (MVMPLVLSLALTPPPLCHA) are cleaved as a signal peptide. 5 disulfides stabilise this stretch: C30/C87, C54/C102, C63/C118, C67/C120, and C123/C130.

This sequence belongs to the glycoprotein hormones subunit beta family. As to quaternary structure, heterodimer with GPHA2; non-covalently-linked. In terms of tissue distribution, expressed by the venom duct.

It is found in the secreted. In Conus victoriae (Queen Victoria cone), this protein is Thyrostimulin beta-5 subunit.